Reading from the N-terminus, the 576-residue chain is Protein HYPER-SENSITIVITY-RELATED 4 (576 aa).

A helical transmembrane segment spans residues 55 to 75; the sequence is LATAKTVLTTAASVAATAMLA. Residue 306–313 participates in ATP binding; the sequence is GPPGTGKS. Residues 508–532 form a disordered region; the sequence is DKAKTEKQELENKKKTKEGTDSVVK.

It belongs to the AAA ATPase family. BCS1 subfamily. As to quaternary structure, binds to the Yariv phenylglycoside (beta-D-Glc)(3). Requires Mg(2+) as cofactor.

The protein localises to the membrane. It catalyses the reaction ATP + H2O = ADP + phosphate + H(+). This is Protein HYPER-SENSITIVITY-RELATED 4 from Arabidopsis thaliana (Mouse-ear cress).